The primary structure comprises 689 residues: Elongation factor G (689 aa).

A tr-type G domain is found at 9–283 (AKFRNIGIMA…AIVEFMPSPL (275 aa)). GTP contacts are provided by residues 18–25 (AHIDAGKT), 82–86 (DTPGH), and 136–139 (NKMD).

It belongs to the TRAFAC class translation factor GTPase superfamily. Classic translation factor GTPase family. EF-G/EF-2 subfamily.

The protein resides in the cytoplasm. Catalyzes the GTP-dependent ribosomal translocation step during translation elongation. During this step, the ribosome changes from the pre-translocational (PRE) to the post-translocational (POST) state as the newly formed A-site-bound peptidyl-tRNA and P-site-bound deacylated tRNA move to the P and E sites, respectively. Catalyzes the coordinated movement of the two tRNA molecules, the mRNA and conformational changes in the ribosome. In Clostridium botulinum (strain Kyoto / Type A2), this protein is Elongation factor G.